The chain runs to 110 residues: Iron-sulfur cluster assembly protein CyaY (110 aa).

The protein belongs to the frataxin family.

Involved in iron-sulfur (Fe-S) cluster assembly. May act as a regulator of Fe-S biogenesis. This is Iron-sulfur cluster assembly protein CyaY from Variovorax paradoxus (strain S110).